The sequence spans 707 residues: Zinc finger protein 60 (707 aa).

One can recognise a KRAB domain in the interval 14–86 (VTFRDVAVDF…VKKETGRPSQ (73 aa)). 19 consecutive C2H2-type zinc fingers follow at residues 173–195 (YKCK…ESIH), 201–223 (YECK…QKSH), 229–251 (FECN…KNIH), 257–282 (FECE…RTIH), 288–310 (YKCN…QKIH), 316–338 (FHCK…ENIH), 344–366 (FECK…YDTH), 372–394 (FECN…QKTH), 400–422 (FKCK…QRIH), 428–450 (YQCK…QSIH), 456–478 (FECK…QRFH), 484–506 (FECK…KTSH), 512–534 (FECK…RIIH), 540–562 (YKCN…EKIH), 568–590 (FECK…QTIH), 596–618 (YECE…QRIH), 624–646 (FQCK…ERIH), 652–674 (FQCK…FRIH), and 680–702 (YECS…QSIH).

The protein belongs to the krueppel C2H2-type zinc-finger protein family. In terms of tissue distribution, expressed widely and evenly in most adult mouse tissues.

It is found in the nucleus. Functionally, may have a role during differentiation processes. The chain is Zinc finger protein 60 (Zfp60) from Mus musculus (Mouse).